A 642-amino-acid chain; its full sequence is Poly(A) RNA polymerase protein 1 (642 aa).

Disordered stretches follow at residues 1–29 (MTRL…KSSF) and 84–104 (TSSE…LEDN). Residues 88 to 100 (DEQRAESSKRNNS) are compositionally biased toward basic and acidic residues. Mg(2+) is bound by residues Asp-233 and Asp-235. Positions 298, 323, 428, and 432 each coordinate ATP. Residues 368–428 (NLGVLLIDFF…AIQDPGDPNN (61 aa)) enclose the PAP-associated domain. The disordered stretch occupies residues 535–642 (AKKKQKAKKD…DYWLSKGQAL (108 aa)). Residues 578 to 588 (QGSLLHQNNLS) are compositionally biased toward polar residues. Phosphoserine is present on residues Ser-596 and Ser-602. A compositionally biased stretch (basic and acidic residues) spans 604–635 (QDQKGRDTPSGQDEKSPLETKTVDAQTRRDYW).

Belongs to the DNA polymerase type-B-like family. In terms of assembly, component of the TRAMP5 complex composed of at least AIR1, MTR4 and TFR5. Interacts with POL2, DPB2 and DPB11. Mg(2+) serves as cofactor. The cofactor is Mn(2+).

Its subcellular location is the nucleus. The protein localises to the nucleolus. It catalyses the reaction RNA(n) + ATP = RNA(n)-3'-adenine ribonucleotide + diphosphate. Its function is as follows. Catalytic subunit of the TRAMP5 complex which has a poly(A) RNA polymerase activity and is involved in a post-transcriptional quality control mechanism limiting inappropriate expression of genetic information. Polyadenylation is required for the degradative activity of the exosome on several of its nuclear RNA substrates like cryptic transcripts generated by RNA polymerase II and III, or hypomethylated pre-tRNAi-Met. Polyadenylates RNA processing and degradation intermediates of snRNAs, snoRNAs and mRNAs that accumulate in strains lacking a functional exosome. TRF5 is also required for proper nuclear division in mitosis and sister chromatid cohesion. Involved in the regulation of histone mRNA levels. May mediate mitotic chromosome condensation. In Saccharomyces cerevisiae (strain ATCC 204508 / S288c) (Baker's yeast), this protein is Poly(A) RNA polymerase protein 1 (TRF5).